A 1207-amino-acid chain; its full sequence is Histidine kinase 1 (1207 aa).

Positions 1 to 10 are enriched in polar residues; it reads MRGDSFSMSI. Residues 1–20 form a disordered region; that stretch reads MRGDSFSMSIENLPDSPMGS. Residues 1–81 lie on the Cytoplasmic side of the membrane; sequence MRGDSFSMSI…SSYYSVFVVR (81 aa). The helical transmembrane segment at 82–102 threads the bilayer; the sequence is LAIMVMLAILIGLLTVLTWHF. Residues 103–446 are Extracellular-facing; sequence TRIYTKQSLQ…GKVDERAFKT (344 aa). A helical transmembrane segment spans residues 447–467; it reads LIILISASVCIFFIGCVCILI. Residues 468-1207 are Cytoplasmic-facing; the sequence is LTNGVSKEMK…PSAFQTSLSA (740 aa). Residues 505–763 form the Histidine kinase domain; the sequence is NMSHELRTPM…LMRLYLILST (259 aa). Histidine 508 is modified (phosphohistidine; by autocatalysis). 2 disordered regions span residues 964 to 987 and 1000 to 1021; these read DTCS…VKPS and DATT…PEEE. The segment covering 975-984 has biased composition (basic and acidic residues); it reads SGEKQVDKSV. Over residues 1000 to 1014 the composition is skewed to low complexity; that stretch reads DATTSNDDSTSASMT. The region spanning 1045–1196 is the Response regulatory domain; sequence RILLAEDTPV…LMVSTILSLT (152 aa). Position 1127 is a 4-aspartylphosphate (aspartate 1127).

In terms of assembly, interacts with AHP2, depending of the phosphorylation state of Asp-1075 in the receiver domain, but probably not with AHP1 and AHP3. In terms of processing, autophosphorylated predominantly on His residues. Activation probably requires a transfer of a phosphate group between a His in the transmitter domain and an Asp of the receiver domain. In terms of tissue distribution, mostly expressed in roots, and, to a lower extent, in stems, leaves and flowers.

It is found in the cell membrane. The enzyme catalyses ATP + protein L-histidine = ADP + protein N-phospho-L-histidine.. Functionally, functions as an osmosensor histidine kinase that detects water stress and transmits the stress signal to a downstream MAPK cascade. This protein undergoes an ATP-dependent autophosphorylation at a conserved histidine residue in the kinase core, and a phosphoryl group is then transferred to a conserved aspartate residue in the receiver domain. Positive regulator of drought and salt stress responses, and abscisic acid (ABA) signaling. Confers drought tolerance, probably by regulating levels of ABA accumulation. Plays a redundant role in regulating plant growth and development. Required for the regulation of desiccation processes during seed formation. This is Histidine kinase 1 (AHK1) from Arabidopsis thaliana (Mouse-ear cress).